Consider the following 242-residue polypeptide: Biosynthetic peptidoglycan transglycosylase (242 aa).

The chain crosses the membrane as a helical span at residues 19-39; that stretch reads ILAALAVFWGGGIALFSVVPV.

The protein belongs to the glycosyltransferase 51 family.

The protein localises to the cell inner membrane. The enzyme catalyses [GlcNAc-(1-&gt;4)-Mur2Ac(oyl-L-Ala-gamma-D-Glu-L-Lys-D-Ala-D-Ala)](n)-di-trans,octa-cis-undecaprenyl diphosphate + beta-D-GlcNAc-(1-&gt;4)-Mur2Ac(oyl-L-Ala-gamma-D-Glu-L-Lys-D-Ala-D-Ala)-di-trans,octa-cis-undecaprenyl diphosphate = [GlcNAc-(1-&gt;4)-Mur2Ac(oyl-L-Ala-gamma-D-Glu-L-Lys-D-Ala-D-Ala)](n+1)-di-trans,octa-cis-undecaprenyl diphosphate + di-trans,octa-cis-undecaprenyl diphosphate + H(+). It participates in cell wall biogenesis; peptidoglycan biosynthesis. Functionally, peptidoglycan polymerase that catalyzes glycan chain elongation from lipid-linked precursors. The chain is Biosynthetic peptidoglycan transglycosylase from Salmonella paratyphi B (strain ATCC BAA-1250 / SPB7).